The primary structure comprises 277 residues: Inositol monophosphatase 1 (277 aa).

Residues glutamate 70, aspartate 90, isoleucine 92, and aspartate 93 each coordinate Mg(2+). Glutamate 70 contacts substrate. Residue 92-95 (IDGT) coordinates substrate. At threonine 168 the chain carries Phosphothreonine. Residues 194-196 (GTA), glutamate 213, and aspartate 220 each bind substrate. Aspartate 220 is a Mg(2+) binding site.

The protein belongs to the inositol monophosphatase superfamily. Homodimer. Requires Mg(2+) as cofactor.

Its subcellular location is the cytoplasm. It catalyses the reaction a myo-inositol phosphate + H2O = myo-inositol + phosphate. It carries out the reaction 1D-myo-inositol 1-phosphate + H2O = myo-inositol + phosphate. The enzyme catalyses 1D-myo-inositol 2-phosphate + H2O = myo-inositol + phosphate. The catalysed reaction is 1D-myo-inositol 3-phosphate + H2O = myo-inositol + phosphate. It catalyses the reaction 1D-myo-inositol 4-phosphate + H2O = myo-inositol + phosphate. It carries out the reaction 1D-myo-inositol 5-phosphate + H2O = myo-inositol + phosphate. The enzyme catalyses 1D-myo-inositol 6-phosphate + H2O = myo-inositol + phosphate. The catalysed reaction is scyllo-inositol 1-phosphate + H2O = scyllo-inositol + phosphate. It catalyses the reaction alpha-D-galactose 1-phosphate + H2O = D-galactose + phosphate. It carries out the reaction alpha-D-glucose 1-phosphate + H2O = D-glucose + phosphate. The enzyme catalyses D-glucose 6-phosphate + H2O = D-glucose + phosphate. The catalysed reaction is beta-D-fructose 1-phosphate + H2O = D-fructose + phosphate. It catalyses the reaction glycerol 2-phosphate + H2O = glycerol + phosphate. It carries out the reaction adenosine 2'-phosphate + H2O = adenosine + phosphate. It functions in the pathway polyol metabolism; myo-inositol biosynthesis; myo-inositol from D-glucose 6-phosphate: step 2/2. Activity with myo-inositol monophosphates and D-galactose 1-phosphate is inhibited by Li(+), Ca(2+) and Mn(2+), but also by Mg(2+) at concentrations above 3 mM. Functionally, phosphatase involved in the dephosphorylation of myo-inositol monophosphates to generate myo-inositol. Is also able to dephosphorylate scyllo-inositol-phosphate, myo-inositol 1,4-diphosphate, scyllo-inositol-1,3-diphosphate and scyllo-inositol-1,4-diphosphate. Also dephosphorylates in vitro other sugar-phosphates including D-galactose-1-phosphate, glucose-1-phosphate, glucose-6-phosphate, fructose-1-phosphate, beta-glycerophosphate and 2'-AMP. Responsible for the provision of inositol required for synthesis of phosphatidylinositols and polyphosphoinositides, and involved in maintaining normal brain function. Has been implicated as the pharmacological target for lithium (Li(+)) action in brain, which is used to treat bipolar affective disorder. Is equally active with 1D-myo-inositol 1-phosphate, 1D-myo-inositol 3-phosphate and D-galactose 1-phosphate. The polypeptide is Inositol monophosphatase 1 (Homo sapiens (Human)).